The following is a 931-amino-acid chain: Isoleucine--tRNA ligase (931 aa).

The 'HIGH' region signature appears at 58 to 68; it reads PYANGHLHCGH. L-isoleucyl-5'-AMP is bound at residue glutamate 559. Residues 600–604 carry the 'KMSKS' region motif; it reads KLSKS. Lysine 603 contacts ATP. Zn(2+) is bound by residues cysteine 894, cysteine 897, cysteine 914, and cysteine 917.

The protein belongs to the class-I aminoacyl-tRNA synthetase family. IleS type 1 subfamily. Monomer. The cofactor is Zn(2+).

The protein localises to the cytoplasm. It carries out the reaction tRNA(Ile) + L-isoleucine + ATP = L-isoleucyl-tRNA(Ile) + AMP + diphosphate. In terms of biological role, catalyzes the attachment of isoleucine to tRNA(Ile). As IleRS can inadvertently accommodate and process structurally similar amino acids such as valine, to avoid such errors it has two additional distinct tRNA(Ile)-dependent editing activities. One activity is designated as 'pretransfer' editing and involves the hydrolysis of activated Val-AMP. The other activity is designated 'posttransfer' editing and involves deacylation of mischarged Val-tRNA(Ile). The protein is Isoleucine--tRNA ligase of Legionella pneumophila (strain Lens).